Consider the following 1930-residue polypeptide: MPGGYKGECGDDVDPMPFLAPPEKERIEAMNKPYDIKKSCWVKDEKEGFIAGEIQSEQGDQVTVKTVNNQTVTVKKDDVQQMNPPKFYQASDMADMTFLNEASVLNNLRQRYTNMRIYTYSGLFCVTVNPYKWLPIYGARVANMYKGKKRTEMPPHLFSISDNAYHDMLMNRENQSMLITGESGAGKTENTKKVIQYFANVGGTGKQSSDGKGQGSLEDQIIQANPVLEAFGNAKTIRNNNSSRFGKFIRIHFGTTGKLAGADIESYLLEKSRVISQQAAERGYHIFYQILSNKKPELIESLLLVPNPKEYHWVSQGVTVVENMDDGEELQITDVAFDVLGFSAEEKIGIYKLTGGIMHFGNMKFKQKPREEQAEVDTTEVADKVSHLMGLNSGELQKGITRPRVKVGNEFVQKGQNVEQCNNSIGALGKAIYDKMFKWLVVRINKTLDTKMQRQFFIGVLDIAGFEIFEFNSFEQLCINFTNEKLQQFFNHHMFVLEQEEYKREGIEWVFIDFGLDLQACIDLLEKPMGIFSILEEQCVFPKATDATFKAALYDNHLGKSNNFLKPKGGKGKGPEAHFELVHYAGTVAYNITGWLEKNKDPLNETVVGLFQKSSLGLLALLFKEEEAPAGSKKQKRGSSFMTVSNFYREQLNKLMATLHSTAPHFVRCIVPNEFKQSGVVDAHLIMHQLACNGVLEGIRICRKGFPNRMQYPEFKQRYQVLNPNVIPQGFVDNKKASELLLGSIDLDVNEYKIGHTKVFFRAGILAKLEDMRDERLAKIMTMLQCRLRGFLMRIEFKKMLERRIGLKVIQRNTRKFLELRFWGWWKLYNKVKPLLNVARQEEEMKAKEEELRNAMSKTQELLSRVKELEEKMATLSQEKNDLTIQLQAEQENVIDAEERLTQMMKTKMDLESQISDMRERLEEEEGTAASLSATKRKLEGEMSDLKRDLEGLETTLAKTEKEKQALDHRVRTLTGDLSLREDSIAKLQKEKRALEELHQKTLDDLQAEEDKVNHLTKTNSKLSTQIHELEDNWEQEKKIRAEVEKARRKAESDLKMTIDNLNDMERSKLDLEEVVKKRDMEINSVNSKYEDEQSLNSTLQRKLKEHQARIEELEEELEAERSMRAKVEKQRSDLSRDLEDLSDRLEEAGGATSAQIEQNRKREAELLKLRRELEEAALQSEAAASTLRKKHTDSMAELTEHVENLQRVKSKLEKDKQVMKAEIDDLNASMETVQKSKMNAEAHIRKLEDSLSEANAKVAELERNQAEINAVRTRLQAENGELSREYEESQSRLNQILRIKTSLTSQVDDYKRQLDEESKSRSAAMVSLANTKHDLDLVKEQLEEEQGGKSELQRLVSKLNTEVTTWRTKYETDAIQRTEELEETKRKLAARLQEAEETAEAAQARAASLEKNKQRLQAEVEDLTIDLEKANAAAAALDKKQRVFDKMLAEWQQKCEELQVEVDSSQKECRMYMTESFKIKTAYEESLEHLESVKKENKTLQEEIKELIDQLGEGGRSVHELQKLKKKLEIEKEELQVALEEAESSLEVEESKVIRIQLELAQVKADIDRRIHEKEEEFEATRKNHQRAIESLQASLEAEAKGRAEALRLKKKMETDLNEMEIQLDHANKNNSELVKTLKRLQQQIKDLQVQMDEDARQHEELREQYNLQERRLSLLQTELEEVRSGLEGSERSRKLLEQEVVEITERHNEVNIQNQSLLVVKRKLESDVQRISSEHEELISEFRSADERAKKAMTDAARMAEELRQEQDHCMHLEKIKKNYEITIKDLQAKMEEAEQLALKGGKRTIMKLEARIKELETELDGEQKQHVETVKTLRKNERRLKELVFQTEEDHKTNQRMQELVEKLQNKLKVYKRQIEEAEEQANQTLARYRKTVHELDDAEERAGMAETALNKLRTRHRVAGKGITSV.

A Myosin N-terminal SH3-like domain is found at 35-84 (DIKKSCWVKDEKEGFIAGEIQSEQGDQVTVKTVNNQTVTVKKDDVQQMNP). In terms of domain architecture, Myosin motor spans 88 to 774 (YQASDMADMT…ILAKLEDMRD (687 aa)). 181–188 (GESGAGKT) serves as a coordination point for ATP. 2 actin-binding regions span residues 652–674 (LNKL…VPNE) and 753–767 (KIGH…GILA). The IQ domain occupies 777–806 (LAKIMTMLQCRLRGFLMRIEFKKMLERRIG). The stretch at 835–1921 (LLNVARQEEE…ALNKLRTRHR (1087 aa)) forms a coiled coil. Positions 1116–1137 (EELEAERSMRAKVEKQRSDLSR) are disordered. The segment covering 1120–1137 (AERSMRAKVEKQRSDLSR) has biased composition (basic and acidic residues).

Belongs to the TRAFAC class myosin-kinesin ATPase superfamily. Myosin family.

The protein localises to the cytoplasm. It localises to the myofibril. In terms of biological role, may play a role in masticatory muscles contraction. The sequence is that of Myosin-16 from Canis lupus familiaris (Dog).